A 310-amino-acid polypeptide reads, in one-letter code: Alpha/beta hydrolase domain-containing protein 17C (310 aa).

Catalysis depends on charge relay system residues serine 192, aspartate 257, and histidine 286.

It belongs to the AB hydrolase superfamily. ABHD17 family. In terms of processing, palmitoylated on cysteine residues located in a cysteine cluster at the N-terminus which promotes membrane localization.

It is found in the recycling endosome membrane. It localises to the cell projection. The protein resides in the dendritic spine. Its subcellular location is the postsynaptic density membrane. The enzyme catalyses S-hexadecanoyl-L-cysteinyl-[protein] + H2O = L-cysteinyl-[protein] + hexadecanoate + H(+). In terms of biological role, hydrolyzes fatty acids from S-acylated cysteine residues in proteins. This is Alpha/beta hydrolase domain-containing protein 17C from Xenopus tropicalis (Western clawed frog).